A 382-amino-acid chain; its full sequence is 8-amino-7-oxononanoate synthase (382 aa).

Residue Arg26 participates in substrate binding. A pyridoxal 5'-phosphate-binding site is contributed by 104-105 (GY). Residue His129 participates in substrate binding. Pyridoxal 5'-phosphate contacts are provided by residues Ser175, 200–203 (DEAH), and 232–235 (TLSK). At Lys235 the chain carries N6-(pyridoxal phosphate)lysine. Substrate is bound at residue Thr345.

The protein belongs to the class-II pyridoxal-phosphate-dependent aminotransferase family. BioF subfamily. As to quaternary structure, homodimer. Requires pyridoxal 5'-phosphate as cofactor.

The catalysed reaction is 6-carboxyhexanoyl-[ACP] + L-alanine + H(+) = (8S)-8-amino-7-oxononanoate + holo-[ACP] + CO2. Its pathway is cofactor biosynthesis; biotin biosynthesis. Functionally, catalyzes the decarboxylative condensation of pimeloyl-[acyl-carrier protein] and L-alanine to produce 8-amino-7-oxononanoate (AON), [acyl-carrier protein], and carbon dioxide. In Mycobacterium sp. (strain KMS), this protein is 8-amino-7-oxononanoate synthase.